A 273-amino-acid polypeptide reads, in one-letter code: 1,4-dihydroxy-2-naphthoyl-CoA synthase (273 aa).

Substrate-binding positions include Arg34, 73–77, Tyr85, 117–121, Thr143, Ser149, Tyr246, and Lys261; these read SGGDQ and YAVGG. 142 to 144 lines the hydrogencarbonate pocket; it reads QTG. The span at 254-265 shows a compositional bias: basic and acidic residues; it reads GRDAFKEKRDPD. Residues 254–273 are disordered; sequence GRDAFKEKRDPDFDQFPKFP.

The protein belongs to the enoyl-CoA hydratase/isomerase family. MenB subfamily. The cofactor is hydrogencarbonate.

It carries out the reaction 2-succinylbenzoyl-CoA + H(+) = 1,4-dihydroxy-2-naphthoyl-CoA + H2O. The protein operates within quinol/quinone metabolism; 1,4-dihydroxy-2-naphthoate biosynthesis; 1,4-dihydroxy-2-naphthoate from chorismate: step 6/7. Its pathway is quinol/quinone metabolism; menaquinone biosynthesis. Functionally, converts o-succinylbenzoyl-CoA (OSB-CoA) to 1,4-dihydroxy-2-naphthoyl-CoA (DHNA-CoA). The chain is 1,4-dihydroxy-2-naphthoyl-CoA synthase from Staphylococcus aureus (strain MRSA252).